Reading from the N-terminus, the 456-residue chain is Glutamate--tRNA ligase 1 (456 aa).

Residues 9 to 19 (PSPTGQIHIGN) carry the 'HIGH' region motif. The 'KMSKS' region signature appears at 250-254 (GLSKR). Lys-253 is a binding site for ATP.

The protein belongs to the class-I aminoacyl-tRNA synthetase family. Glutamate--tRNA ligase type 1 subfamily. As to quaternary structure, monomer.

The protein localises to the cytoplasm. It carries out the reaction tRNA(Glu) + L-glutamate + ATP = L-glutamyl-tRNA(Glu) + AMP + diphosphate. Catalyzes the attachment of glutamate to tRNA(Glu) in a two-step reaction: glutamate is first activated by ATP to form Glu-AMP and then transferred to the acceptor end of tRNA(Glu). In Chelativorans sp. (strain BNC1), this protein is Glutamate--tRNA ligase 1.